Consider the following 216-residue polypeptide: uncharacterized protein (216 aa).

Residues 8-63 (LKTLMTSVHINASELARRTGIAQPIIHRLSTGQNTNPKLATIKPIARYFMVNISQL) enclose the HTH cro/C1-type domain. Positions 19-38 (ASELARRTGIAQPIIHRLST) form a DNA-binding region, H-T-H motif.

This is an uncharacterized protein from Coxiella burnetii (strain RSA 493 / Nine Mile phase I).